A 313-amino-acid chain; its full sequence is tRNA dimethylallyltransferase (313 aa).

17-24 lines the ATP pocket; the sequence is GPTASGKT. 19–24 lines the substrate pocket; that stretch reads TASGKT. Interaction with substrate tRNA stretches follow at residues 42–45, 166–170, 247–252, and 280–287; these read DSAL, QRLSR, RCVGYR, and KRQITWLR.

This sequence belongs to the IPP transferase family. Monomer. It depends on Mg(2+) as a cofactor.

The enzyme catalyses adenosine(37) in tRNA + dimethylallyl diphosphate = N(6)-dimethylallyladenosine(37) in tRNA + diphosphate. In terms of biological role, catalyzes the transfer of a dimethylallyl group onto the adenine at position 37 in tRNAs that read codons beginning with uridine, leading to the formation of N6-(dimethylallyl)adenosine (i(6)A). This Proteus mirabilis (strain HI4320) protein is tRNA dimethylallyltransferase.